Here is a 60-residue protein sequence, read N- to C-terminus: Putative SERF-like protein (60 aa).

Positions 1-53 are enriched in basic and acidic residues; that stretch reads MTRGNQRDLARQKNQKKQADLTKGKRTDNLTVEQRKARDAELMREKQKKKEEA. Positions 1–60 are disordered; it reads MTRGNQRDLARQKNQKKQADLTKGKRTDNLTVEQRKARDAELMREKQKKKEEAAAAGTSK.

The protein belongs to the SERF family.

This Drosophila melanogaster (Fruit fly) protein is Putative SERF-like protein.